Reading from the N-terminus, the 353-residue chain is Fe(3+) ions import ATP-binding protein FbpC 1 (353 aa).

The region spanning Val9–Met239 is the ABC transporter domain. Position 41–48 (Gly41–Thr48) interacts with ATP.

The protein belongs to the ABC transporter superfamily. Fe(3+) ion importer (TC 3.A.1.10) family. In terms of assembly, the complex is composed of two ATP-binding proteins (FbpC), two transmembrane proteins (FbpB) and a solute-binding protein (FbpA).

The protein localises to the cell inner membrane. It catalyses the reaction Fe(3+)(out) + ATP + H2O = Fe(3+)(in) + ADP + phosphate + H(+). In terms of biological role, part of the ABC transporter complex FbpABC involved in Fe(3+) ions import. Responsible for energy coupling to the transport system. The protein is Fe(3+) ions import ATP-binding protein FbpC 1 of Rhizobium meliloti (strain 1021) (Ensifer meliloti).